The following is a 144-amino-acid chain: Large ribosomal subunit protein uL13 (144 aa).

It belongs to the universal ribosomal protein uL13 family. In terms of assembly, part of the 50S ribosomal subunit.

In terms of biological role, this protein is one of the early assembly proteins of the 50S ribosomal subunit, although it is not seen to bind rRNA by itself. It is important during the early stages of 50S assembly. This is Large ribosomal subunit protein uL13 from Clostridium novyi (strain NT).